The sequence spans 222 residues: Large ribosomal subunit protein mL64 (222 aa).

3 disordered regions span residues 1–51 (MAAP…PRWQ), 136–170 (RRQQ…HVDP), and 182–222 (LEKQ…TPDS). Over residues 141–170 (ARREKAQADKERRARLQAEAQERLGYHVDP) the composition is skewed to basic and acidic residues. Residues 144 to 213 (EKAQADKERR…AAMAAAAAQD (70 aa)) adopt a coiled-coil conformation. Residues 184 to 200 (KQHRKRLKEEKQRKKKE) carry the Nuclear localization signal motif. Residues 203–212 (AAAMAAAAAQ) are compositionally biased toward low complexity.

Belongs to the mitochondrion-specific ribosomal protein mL64 family. Component of the mitochondrial ribosome large subunit (39S) which comprises a 16S rRNA and about 50 distinct proteins. Interacts with GADD45A, GADD45B and GADD45G. Interacts with NR4A1 via the NR4A1 AB domain. Interacts with ATAD3A and ATAD3B.

Its subcellular location is the mitochondrion. It is found in the nucleus. Its function is as follows. Acts as a negative regulator of G1 to S cell cycle phase progression by inhibiting cyclin-dependent kinases. Inhibitory effects are additive with GADD45 proteins but also occur in the absence of GADD45 proteins. Acts as a repressor of the orphan nuclear receptor NR4A1 by inhibiting AB domain-mediated transcriptional activity. May be involved in the hormone-mediated regulation of NR4A1 transcriptional activity. May play a role in mitochondrial protein synthesis. The sequence is that of Large ribosomal subunit protein mL64 (GADD45GIP1) from Bos taurus (Bovine).